A 255-amino-acid polypeptide reads, in one-letter code: Indole-3-glycerol phosphate synthase (255 aa).

It belongs to the TrpC family.

The catalysed reaction is 1-(2-carboxyphenylamino)-1-deoxy-D-ribulose 5-phosphate + H(+) = (1S,2R)-1-C-(indol-3-yl)glycerol 3-phosphate + CO2 + H2O. Its pathway is amino-acid biosynthesis; L-tryptophan biosynthesis; L-tryptophan from chorismate: step 4/5. In Streptococcus pneumoniae (strain Taiwan19F-14), this protein is Indole-3-glycerol phosphate synthase.